A 495-amino-acid chain; its full sequence is RNA-binding KH domain-containing protein PEPPER (495 aa).

KH domains lie at 73–140, 165–234, and 340–403; these read DCVF…MDAV, FSSV…LEAI, and QVSQ…EQLI. A disordered region spans residues 474–495; the sequence is GQTYGSEYRPASDVGGYSSYNL.

Interacts with HUA1 and HEN4. In terms of tissue distribution, detected in roots, shoots, leaves, flowers and fruits.

The protein localises to the nucleus. Functionally, regulates vegetative and gynoecium development. In concert with HUA2, antagonizes FLK by positively regulating FLC probably at transcriptional and post-transcriptional levels, and thus acts as a negative regulator of flowering. This is RNA-binding KH domain-containing protein PEPPER from Arabidopsis thaliana (Mouse-ear cress).